Consider the following 825-residue polypeptide: Endochitinase A1 (825 aa).

Positions 1-22 are cleaved as a signal peptide; that stretch reads MVSSKLSFVATAVAALAPLASA. One can recognise a GH18 domain in the interval 29-338; sequence SNLAIYWGQG…DHMKDILLHC (310 aa). Glu174 acts as the Proton donor in catalysis. 3 disordered regions span residues 338–568, 680–736, and 750–792; these read CDPS…TTTA, PVTE…VSTS, and PLIL…YTQE. A compositionally biased stretch (low complexity) spans 344 to 554; sequence VTSSSAVPSS…STDESSTTVG (211 aa). The N-linked (GlcNAc...) asparagine glycan is linked to Asn559. The segment covering 701-712 has biased composition (polar residues); the sequence is EGSNPTQPSGAS. N-linked (GlcNAc...) asparagine glycosylation occurs at Asn717. Over residues 772 to 792 the composition is skewed to polar residues; sequence PSGQNSGSSSHVPIPPSYTQE. The GPI-anchor amidated glycine moiety is linked to residue Gly800. A propeptide spans 801–825 (removed in mature form); it reads AASRVTGLGHGLVLTVLTLSAFFVL.

This sequence belongs to the glycosyl hydrolase 18 family. Chitinase class III subfamily. Post-translationally, O-mannosylated by pmt4.

It localises to the cell membrane. The protein localises to the secreted. It is found in the cell wall. It catalyses the reaction Random endo-hydrolysis of N-acetyl-beta-D-glucosaminide (1-&gt;4)-beta-linkages in chitin and chitodextrins.. With respect to regulation, the cyclic peptide natural product argifin acts as a specific inhibitor. GPI-anchored chitinase involved in the degradation of chitin, a component of the cell walls of fungi and exoskeletal elements of some animals (including worms and arthropods). Required to reshape the cell wall at the sites where cell wall remodeling and/or cell wall maturation actively take place such as sites of conidia formation. This is Endochitinase A1 (chiA1) from Aspergillus fumigatus (Neosartorya fumigata).